We begin with the raw amino-acid sequence, 321 residues long: uncharacterized protein (321 aa).

The segment at 1–80 (MQGGQEVGRE…GELSGGWGEF (80 aa)) is disordered.

This is an uncharacterized protein from Mus musculus (Mouse).